The chain runs to 152 residues: Transcriptional regulator MraZ (152 aa).

SpoVT-AbrB domains lie at 5 to 52 and 81 to 124; these read ANAI…PLPE and ATEG…DHSV.

Belongs to the MraZ family. As to quaternary structure, forms oligomers.

The protein localises to the cytoplasm. Its subcellular location is the nucleoid. The sequence is that of Transcriptional regulator MraZ from Pseudoalteromonas atlantica (strain T6c / ATCC BAA-1087).